A 137-amino-acid chain; its full sequence is MSAVLVLALVLLSLTCVTDAISDACLTCICKQESYGCTQIGCRMDGRSLSCGYFQIKKSYWIDCGRLGSSWEACADDYNCAVRCVRAYMKKYIGKSGCTANCKNYARLHNGGPKGCTKPSTLTYWNAVKNQGCSINS.

Positions 1–20 are cleaved as a signal peptide; it reads MSAVLVLALVLLSLTCVTDA. The region spanning 21–134 is the I-type lysozyme domain; that stretch reads ISDACLTCIC…WNAVKNQGCS (114 aa). Disulfide bonds link cysteine 25–cysteine 102, cysteine 30–cysteine 37, cysteine 42–cysteine 51, cysteine 64–cysteine 84, cysteine 74–cysteine 80, and cysteine 98–cysteine 116. Glutamate 33 functions as the Proton donor in the catalytic mechanism. Residue aspartate 45 is the Nucleophile of the active site. 57–63 is a substrate binding site; sequence KKSYWID. Substrate is bound by residues tyrosine 88 and 109-111; that span reads HNG.

It belongs to the glycosyl hydrolase 22 family. Type-I lysozyme subfamily.

Its subcellular location is the secreted. It carries out the reaction Hydrolysis of (1-&gt;4)-beta-linkages between N-acetylmuramic acid and N-acetyl-D-glucosamine residues in a peptidoglycan and between N-acetyl-D-glucosamine residues in chitodextrins.. Functionally, has bacteriolytic activity. May play a role in digestion and in the host defense mechanisms against invading microbes. The chain is Lysozyme (lysoz) from Ostrea edulis (Native oyster).